Reading from the N-terminus, the 540-residue chain is Phosphoenolpyruvate carboxykinase (ATP) (540 aa).

Substrate-binding residues include arginine 67, tyrosine 207, and lysine 213. Residues lysine 213, histidine 232, and 248 to 256 contribute to the ATP site; that span reads GLSGTGKTT. Residues lysine 213 and histidine 232 each contribute to the Mn(2+) site. Aspartate 269 lines the Mn(2+) pocket. Residues glutamate 297, arginine 333, 449 to 450, and threonine 455 each bind ATP; that span reads RI. Arginine 333 contacts substrate.

This sequence belongs to the phosphoenolpyruvate carboxykinase (ATP) family. As to quaternary structure, monomer. Requires Mn(2+) as cofactor.

The protein resides in the cytoplasm. It catalyses the reaction oxaloacetate + ATP = phosphoenolpyruvate + ADP + CO2. It functions in the pathway carbohydrate biosynthesis; gluconeogenesis. Its function is as follows. Involved in the gluconeogenesis. Catalyzes the conversion of oxaloacetate (OAA) to phosphoenolpyruvate (PEP) through direct phosphoryl transfer between the nucleoside triphosphate and OAA. In Aliivibrio fischeri (strain MJ11) (Vibrio fischeri), this protein is Phosphoenolpyruvate carboxykinase (ATP).